The primary structure comprises 156 residues: Transcription antitermination protein NusB (156 aa).

It belongs to the NusB family.

In terms of biological role, involved in transcription antitermination. Required for transcription of ribosomal RNA (rRNA) genes. Binds specifically to the boxA antiterminator sequence of the ribosomal RNA (rrn) operons. The chain is Transcription antitermination protein NusB from Rickettsia bellii (strain OSU 85-389).